Consider the following 359-residue polypeptide: DNA polymerase IV (359 aa).

One can recognise a UmuC domain in the interval Ile-4 to Gly-185. 2 residues coordinate Mg(2+): Asp-8 and Asp-103. Glu-104 is a catalytic residue.

The protein belongs to the DNA polymerase type-Y family. In terms of assembly, monomer. It depends on Mg(2+) as a cofactor.

Its subcellular location is the cytoplasm. It carries out the reaction DNA(n) + a 2'-deoxyribonucleoside 5'-triphosphate = DNA(n+1) + diphosphate. Functionally, poorly processive, error-prone DNA polymerase involved in untargeted mutagenesis. Copies undamaged DNA at stalled replication forks, which arise in vivo from mismatched or misaligned primer ends. These misaligned primers can be extended by PolIV. Exhibits no 3'-5' exonuclease (proofreading) activity. May be involved in translesional synthesis, in conjunction with the beta clamp from PolIII. The chain is DNA polymerase IV from Shewanella frigidimarina (strain NCIMB 400).